A 732-amino-acid polypeptide reads, in one-letter code: Serine/threonine-protein kinase CBK1 (732 aa).

The disordered stretch occupies residues 111-240; the sequence is SFDNHLNVDP…STEAANSDMT (130 aa). Positions 119-159 are enriched in polar residues; the sequence is DPNNTERFTSMDSMNFQPPASTFTQLGNGSSTNLSEISSGQ. The span at 160-171 shows a compositional bias: low complexity; it reads NSLLSNHSVNNL. Positions 172 to 183 are enriched in polar residues; that stretch reads PTALTSDTSPPV. Residues 185–221 are compositionally biased toward low complexity; it reads QHPQFQPQQQQQQQQPQQQQIFQQQQQQQQQQQQPQQ. The segment covering 222–240 has biased composition (polar residues); it reads SRAVVNQSVSTEAANSDMT. The stretch at 281–310 forms a coiled coil; that stretch reads HAIERNQRRLELENKIANEDIGSSEERKNR. A Protein kinase domain is found at 335–647; sequence FHTVKVIGKG…AEEIKQHPFF (313 aa). ATP is bound by residues 341–349 and Lys-364; that span reads IGKGAFGEV. The active-site Proton acceptor is the Asp-458. One can recognise an AGC-kinase C-terminal domain in the interval 648-730; sequence RGVDWDSIRD…SRFDYLTRKN (83 aa).

Belongs to the protein kinase superfamily. STE Ser/Thr protein kinase family. COT1 subfamily. Interacts with MOB2 and BCR1.

The protein resides in the bud neck. It localises to the cell tip. It carries out the reaction L-seryl-[protein] + ATP = O-phospho-L-seryl-[protein] + ADP + H(+). The catalysed reaction is L-threonyl-[protein] + ATP = O-phospho-L-threonyl-[protein] + ADP + H(+). Serine/threonine-protein kinase required for wild-type hyphal growth and transcriptional regulation of cell-wall-associated genes. Involved in the biofilm formation through phosphorylation of the master regulator of biofilm formation BCR1. In Candida albicans (strain SC5314 / ATCC MYA-2876) (Yeast), this protein is Serine/threonine-protein kinase CBK1 (CBK1).